The primary structure comprises 140 residues: Protein archease (140 aa).

3 residues coordinate Ca(2+): Asp11, Asp139, and Leu140.

The protein belongs to the archease family.

Its function is as follows. Activates the tRNA-splicing ligase complex by facilitating the enzymatic turnover of catalytic subunit RtcB. Acts by promoting the guanylylation of RtcB, a key intermediate step in tRNA ligation. Can also alter the NTP specificity of RtcB such that ATP, dGTP or ITP is used efficiently. This is Protein archease from Methanopyrus kandleri (strain AV19 / DSM 6324 / JCM 9639 / NBRC 100938).